An 887-amino-acid chain; its full sequence is Fibroblast growth factor receptor 2 (887 aa).

Positions 1–18 are cleaved as a signal peptide; it reads MLNKFIVIVTMLAMWNYA. The Extracellular portion of the chain corresponds to 19–416; it reads QDCNFELSKN…KDCVGNSYFT (398 aa). Ig-like C2-type domains follow at residues 22–115 and 180–260; these read NFEL…EFIS and VSGS…LRMK. N28, N74, N93, N230, N261, N268, N328, N334, and N364 each carry an N-linked (GlcNAc...) asparagine glycan. The cysteines at positions 43 and 104 are disulfide-linked. One can recognise an Ig-like C2-type 3 domain in the interval 297 to 387; it reads FNLNSRVCIN…YACRIINFKD (91 aa). C313 and C380 are joined by a disulfide. The helical transmembrane segment at 417–437 threads the bilayer; it reads IIWYSISVGIIILVVISFLII. At 438-887 the chain is on the cytoplasmic side; the sequence is RLYNKYSNGY…SNQCYSTTIV (450 aa). Residues 585–862 enclose the Protein kinase domain; that stretch reads LIIGSKIGEG…IIDKLTHIQL (278 aa). Residues 591–599 and K619 each bind ATP; that span reads IGEGAFGIV. D728 serves as the catalytic Proton acceptor. Y757 carries the phosphotyrosine; by autocatalysis modification.

It belongs to the protein kinase superfamily. Tyr protein kinase family. Fibroblast growth factor receptor subfamily. As to expression, expressed in brain, stem cells and the mesenchymal cells.

It is found in the membrane. It catalyses the reaction L-tyrosyl-[protein] + ATP = O-phospho-L-tyrosyl-[protein] + ADP + H(+). Its function is as follows. Receptor for basic fibroblast growth factor. The polypeptide is Fibroblast growth factor receptor 2 (FGFR2) (Dugesia japonica (Planarian)).